We begin with the raw amino-acid sequence, 410 residues long: Serine hydroxymethyltransferase (410 aa).

(6S)-5,6,7,8-tetrahydrofolate contacts are provided by residues L116 and G120–L122. K225 is modified (N6-(pyridoxal phosphate)lysine).

The protein belongs to the SHMT family. In terms of assembly, homodimer. Requires pyridoxal 5'-phosphate as cofactor.

It is found in the cytoplasm. It carries out the reaction (6R)-5,10-methylene-5,6,7,8-tetrahydrofolate + glycine + H2O = (6S)-5,6,7,8-tetrahydrofolate + L-serine. The protein operates within one-carbon metabolism; tetrahydrofolate interconversion. It participates in amino-acid biosynthesis; glycine biosynthesis; glycine from L-serine: step 1/1. In terms of biological role, catalyzes the reversible interconversion of serine and glycine with tetrahydrofolate (THF) serving as the one-carbon carrier. This reaction serves as the major source of one-carbon groups required for the biosynthesis of purines, thymidylate, methionine, and other important biomolecules. Also exhibits THF-independent aldolase activity toward beta-hydroxyamino acids, producing glycine and aldehydes, via a retro-aldol mechanism. The sequence is that of Serine hydroxymethyltransferase from Lacticaseibacillus casei (strain BL23) (Lactobacillus casei).